Here is a 103-residue protein sequence, read N- to C-terminus: Nucleoid-associated protein Anae109_3761 (103 aa).

The protein belongs to the YbaB/EbfC family. Homodimer.

The protein localises to the cytoplasm. It localises to the nucleoid. Binds to DNA and alters its conformation. May be involved in regulation of gene expression, nucleoid organization and DNA protection. This is Nucleoid-associated protein Anae109_3761 from Anaeromyxobacter sp. (strain Fw109-5).